Reading from the N-terminus, the 87-residue chain is MDLTEGSALGVFSCQLCEVSSPYSFYGQKPPNTRAIVLLEECFGIKDPFSPEREKFLILGSKCSLCSKTVCVGTVRRSCDSQSEAKL.

This sequence belongs to the CDPF1 family.

The chain is Cysteine-rich DPF motif domain-containing protein 1 (cdpf1) from Danio rerio (Zebrafish).